We begin with the raw amino-acid sequence, 118 residues long: uncharacterized protein (118 aa).

The protein belongs to the HesB/IscA family. Ycf83 subfamily.

This is an uncharacterized protein from Synechocystis sp. (strain ATCC 27184 / PCC 6803 / Kazusa).